The primary structure comprises 183 residues: Small ribosomal subunit protein uS4c (183 aa).

In terms of domain architecture, S4 RNA-binding spans 82-143 (MRLDNILFRL…KQRSKALIQN (62 aa)).

This sequence belongs to the universal ribosomal protein uS4 family. In terms of assembly, part of the 30S ribosomal subunit. Contacts protein S5. The interaction surface between S4 and S5 is involved in control of translational fidelity.

It localises to the plastid. The protein resides in the chloroplast. In terms of biological role, one of the primary rRNA binding proteins, it binds directly to 16S rRNA where it nucleates assembly of the body of the 30S subunit. Functionally, with S5 and S12 plays an important role in translational accuracy. The chain is Small ribosomal subunit protein uS4c (rps4) from Gladiolus communis (Cornflag).